The primary structure comprises 691 residues: Elongation factor G (691 aa).

The region spanning 6–281 (SKYRNIGIMA…GVVDFLPSPI (276 aa)) is the tr-type G domain. Residues 15–22 (AHIDAGKT), 79–83 (DTPGH), and 133–136 (NKMD) each bind GTP.

The protein belongs to the TRAFAC class translation factor GTPase superfamily. Classic translation factor GTPase family. EF-G/EF-2 subfamily.

The protein resides in the cytoplasm. Its function is as follows. Catalyzes the GTP-dependent ribosomal translocation step during translation elongation. During this step, the ribosome changes from the pre-translocational (PRE) to the post-translocational (POST) state as the newly formed A-site-bound peptidyl-tRNA and P-site-bound deacylated tRNA move to the P and E sites, respectively. Catalyzes the coordinated movement of the two tRNA molecules, the mRNA and conformational changes in the ribosome. In Wolbachia pipientis wMel, this protein is Elongation factor G.